Here is a 611-residue protein sequence, read N- to C-terminus: Immunoglobulin superfamily member 8 (611 aa).

A signal peptide spans methionine 1–alanine 25. 4 consecutive Ig-like C2-type domains span residues arginine 26–glutamate 143, proline 160–valine 284, serine 301–serine 422, and proline 429–serine 554. The Extracellular segment spans residues arginine 26–threonine 577. Cysteine 47 and cysteine 125 are joined by a disulfide. N-linked (GlcNAc...) asparagine glycans are attached at residues asparagine 48 and asparagine 137. Cysteines 184 and 268 form a disulfide. The EWI motif motif lies at glutamate 272–isoleucine 274. Intrachain disulfides connect cysteine 324/cysteine 404 and cysteine 460/cysteine 542. A glycan (N-linked (GlcNAc...) asparagine) is linked at asparagine 325. A Phosphoserine modification is found at serine 516. Residues leucine 578–alanine 598 traverse the membrane as a helical segment. Topologically, residues threonine 599–arginine 611 are cytoplasmic. Residues cysteine 602 and cysteine 603 are each lipidated (S-palmitoyl cysteine).

In terms of assembly, interacts directly with CD82 and CD9/tetraspanin-29. Also interacts with integrin alpha-3/beta-1 and integrin alpha-4/beta-1. Part of a complex composed of CD9, PTGFRN and CD81. Interacts with CD81/tetraspanin-28. In terms of tissue distribution, expressed in lymphocytes as well as in many tissues with higher expression in brain. Detected in all regions of the brain with weak expression in the pituitary. Expressed selectively by neurons but not by glial cells. Expressed in myoblasts (at protein level).

Its subcellular location is the cell membrane. Functionally, member of the immunoglobulin superfamily (IgSF) that links tetraspanin-enriched microdomains to the actin cytoskeleton and plays several important roles in innate and adaptive immunity. Acts as an inducible receptor of HSPA8 on dendritic cells to enhance the CCL21/SLC-dependent migration of activated mature dendritic cells while attenuating their antigen-specific stimulatory capacities. In complex with alpha-actinins ACTN1 and ACTN4, regulates actin dynamics in the immune synapse and subsequent T-cell activation. Inhibits the entry of several viruses such as hepatitis C Virus (HCV) or HIV-1. Mechanistically, promotes a change in CD81 organization at the plasma membrane by significantly restricting its diffusion which in turn influences CD81 interaction with Claudin-1/CLDN1, preventing CLDN1 from acting as a co-receptor required for HCV entry. Accumulates at the presynaptic terminal, the producer cell side of the virological synapse, to prevent HIV-1 Env-mediated cell-cell fusion. Highly expressed on malignant cells with antigen presentation defects, interacts with NK receptor KLRA9 to suppress NK-cell cytotoxicity. May participate in the regulation of neurite outgrowth and maintenance of the neural network in the adult brain. The protein is Immunoglobulin superfamily member 8 (Igsf8) of Mus musculus (Mouse).